The primary structure comprises 543 residues: T-complex protein 1 subunit eta (543 aa).

M1 carries the post-translational modification N-acetylmethionine. G41 is an ADP binding site. G41 serves as a coordination point for ATP. Position 67 is an N6-acetyllysine (K67). D92 provides a ligand contact to Mg(2+). 6 residues coordinate ADP: G93, T94, T95, S96, S164, and S165. ATP is bound at residue G93. Position 96 (S96) interacts with ATP. N6-acetyllysine is present on residues K250 and K320. The ATP site is built by R398 and G409. G409 is an ADP binding site. K430 is covalently cross-linked (Glycyl lysine isopeptide (Lys-Gly) (interchain with G-Cter in SUMO2)). The ADP site is built by E494 and R499. An ATP-binding site is contributed by R499. The disordered stretch occupies residues 524 to 543 (RSTVDAPTAAGRGRGRGRPH). R535 carries the post-translational modification Omega-N-methylarginine.

Belongs to the TCP-1 chaperonin family. As to quaternary structure, component of the chaperonin-containing T-complex (TRiC), a hexadecamer composed of two identical back-to-back stacked rings enclosing a protein folding chamber. Each ring is made up of eight different subunits: TCP1/CCT1, CCT2, CCT3, CCT4, CCT5, CCT6A/CCT6, CCT7, CCT8. Interacts with PACRG. Interacts with DLEC1.

The protein resides in the cytoplasm. The catalysed reaction is ATP + H2O = ADP + phosphate + H(+). Component of the chaperonin-containing T-complex (TRiC), a molecular chaperone complex that assists the folding of actin, tubulin and other proteins upon ATP hydrolysis. The TRiC complex mediates the folding of WRAP53/TCAB1, thereby regulating telomere maintenance. In Homo sapiens (Human), this protein is T-complex protein 1 subunit eta (CCT7).